The following is a 61-amino-acid chain: [Thr6]-bradykinyl-Val,Asp (61 aa).

The N-terminal stretch at 1 to 22 (MSFLKKSLFLVLFLGFVSFSIC) is a signal peptide. A propeptide spanning residues 23–50 (EEEKREDEEEENEREENKESEEKRNQEE) is cleaved from the precursor. The segment at 24 to 61 (EEKREDEEEENEREENKESEEKRNQEERPPGFTPFRVD) is disordered. Positions 26–36 (KREDEEEENER) are enriched in acidic residues. Over residues 37–52 (EENKESEEKRNQEERP) the composition is skewed to basic and acidic residues. Residue P53 is modified to 4-hydroxyproline; in form [Hyp3,Thr6]-bradykinyl-Val,Asp and [Hyp3,Thr6]-bradykinin.

The protein belongs to the frog skin active peptide (FSAP) family. Bradykinin-related peptide subfamily. Expressed by the skin glands.

It localises to the secreted. In terms of biological role, induces relaxation of rat smooth muscle from tail artery (EC(50)=16.8 nM) and contraction of that from ileum (EC(50)=205 nM), urinary bladder (EC(50)=895 nM) and uterus (EC(50)=60.3 nM). Binds to both bradykinin receptor B1 (BDKRB1) and B2 (BDKRB2). Functionally, [Hyp3,Thr6]-bradykinin: Induces relaxation of rat smooth muscle from tail artery (EC(50)=56.7 nM) and contraction of that from ileum (EC(50)=588 nM), urinary bladder (EC(50)=4.6 uM) and uterus (EC(50)=3.9 nM). Binds to both bradykinin receptor B1 (BDKRB1) and B2 (BDKRB2). In arterial smooth muscle, the effect via BDKRB1 is stronger, in uterus, ileum and urinary bladder the effect via BDKRB2. Induces relaxation of rat smooth muscle from tail artery (EC(50)=10.8 nM) and contraction of that from ileum (EC(50)=645 nM), urinary bladder (EC(50)=1.1 uM) and uterus (EC(50)=1.2 uM). Binds to both bradykinin receptor B1 (BDKRB1) and B2 (BDKRB2). Apart from uterus smooth muscle, the effect via BDKRB2 is stronger. Its function is as follows. [Hyp3,Thr6]-bradykinyl-Val,Asp: Induces relaxation of rat smooth muscle from tail artery (EC(50)=3.5 nM) and contraction of that from ileum (EC(50)=223 nM), urinary bladder (EC(50)=1.5 uM) and uterus (EC(50)=356 nM). Binds to both bradykinin receptor B1 (BDKRB1) and B2 (BDKRB2); the effects via BDKRB2 are stronger. The polypeptide is [Thr6]-bradykinyl-Val,Asp (Agalychnis dacnicolor (Giant Mexican leaf frog)).